We begin with the raw amino-acid sequence, 337 residues long: Inositol 2-dehydrogenase (337 aa).

The protein belongs to the Gfo/Idh/MocA family. In terms of assembly, homotetramer.

It catalyses the reaction myo-inositol + NAD(+) = scyllo-inosose + NADH + H(+). Its function is as follows. Involved in the oxidation of myo-inositol (MI) to 2-keto-myo-inositol (2KMI or 2-inosose). The polypeptide is Inositol 2-dehydrogenase (Corynebacterium glutamicum (strain ATCC 13032 / DSM 20300 / JCM 1318 / BCRC 11384 / CCUG 27702 / LMG 3730 / NBRC 12168 / NCIMB 10025 / NRRL B-2784 / 534)).